Here is a 233-residue protein sequence, read N- to C-terminus: MIDENHPMRAAGNFFGRRHGKPLRPHQSNLFEDLLPRLKLDLATPAPQDLRSLFEAPVETVRMEIGFGGGEHLHHESGRYPQSGFIGVEPFINGMAKMLAALDQAPRPNLRLYDEDATAVLDWLPDASLAGIDLFYPDPWHKRRHWKRRFVSDANLDRFARVLKPGAKFRFASDIEHYVNWTLQHCRRHAAFDWQAESPADWNDAYEGWPGTRYEAKAFHEGRRAAYLTFIRR.

A disordered region spans residues 1–22; sequence MIDENHPMRAAGNFFGRRHGKP. S-adenosyl-L-methionine is bound by residues glutamate 64, glutamate 89, aspartate 116, and aspartate 138. Aspartate 138 is a catalytic residue. Residues lysine 142, aspartate 174, and 212–215 each bind substrate; that span reads TRYE.

It belongs to the class I-like SAM-binding methyltransferase superfamily. TrmB family.

It carries out the reaction guanosine(46) in tRNA + S-adenosyl-L-methionine = N(7)-methylguanosine(46) in tRNA + S-adenosyl-L-homocysteine. It functions in the pathway tRNA modification; N(7)-methylguanine-tRNA biosynthesis. Functionally, catalyzes the formation of N(7)-methylguanine at position 46 (m7G46) in tRNA. The polypeptide is tRNA (guanine-N(7)-)-methyltransferase (Brucella abortus (strain 2308)).